We begin with the raw amino-acid sequence, 394 residues long: Ribulose bisphosphate carboxylase large chain (394 aa).

K5 carries the N6,N6,N6-trimethyllysine modification. Residues N114 and T164 each coordinate substrate. K166 (proton acceptor) is an active-site residue. K168 lines the substrate pocket. Mg(2+) contacts are provided by K192, D194, and E195. K192 is subject to N6-carboxylysine. H285 (proton acceptor) is an active-site residue. 3 residues coordinate substrate: R286, H318, and S370.

Belongs to the RuBisCO large chain family. Type I subfamily. Heterohexadecamer of 8 large chains and 8 small chains. Mg(2+) is required as a cofactor.

It localises to the plastid. The protein resides in the chloroplast. It carries out the reaction 2 (2R)-3-phosphoglycerate + 2 H(+) = D-ribulose 1,5-bisphosphate + CO2 + H2O. The catalysed reaction is D-ribulose 1,5-bisphosphate + O2 = 2-phosphoglycolate + (2R)-3-phosphoglycerate + 2 H(+). Functionally, ruBisCO catalyzes two reactions: the carboxylation of D-ribulose 1,5-bisphosphate, the primary event in carbon dioxide fixation, as well as the oxidative fragmentation of the pentose substrate in the photorespiration process. Both reactions occur simultaneously and in competition at the same active site. The protein is Ribulose bisphosphate carboxylase large chain (rbcL) of Barclaya longifolia (Orchid lily).